The primary structure comprises 227 residues: MSILLPNMAEFDTISELEEEEEAATSSSSPSSSPSSSSSSSVSGPDEDEEDEEEEEEEDEEEEDEEEEEEEVPPPPRVVSEEHLRRYAPDPVLVRGAGHITVFGLSNKFDTEFPSVLTGKVAPEEFKTSIGRVNSCLKKALPVNVKWLLCGCLCCCCTLGCSLWPVICLNKRTRRSIQKLLEWENNRLYHKLALHWKLTKRKCETSNMMEYVILIEFLPKYPIFRPD.

Residues 1 to 84 (MSILLPNMAE…PPRVVSEEHL (84 aa)) form a disordered region. The span at 13–23 (TISELEEEEEA) shows a compositional bias: acidic residues. The segment covering 24–44 (ATSSSSPSSSPSSSSSSSVSG) has biased composition (low complexity). A compositionally biased stretch (acidic residues) spans 45 to 72 (PDEDEEDEEEEEEEDEEEEDEEEEEEEV). Residues 46-73 (DEDEEDEEEEEEEDEEEEDEEEEEEEVP) are a coiled coil.

It belongs to the CHIC family. In terms of processing, palmitoylated. In terms of tissue distribution, expressed moderately in the brain.

The protein resides in the cell membrane. It localises to the cytoplasmic vesicle. The polypeptide is Cysteine-rich hydrophobic domain-containing protein 1 (Chic1) (Mus musculus (Mouse)).